The chain runs to 387 residues: Protoheme IX farnesyltransferase, mitochondrial (387 aa).

8 helical membrane passes run 95 to 115 (LTVL…YPGL), 117 to 137 (FNTL…ANAF), 183 to 203 (FLVN…YMGI), 212 to 232 (IVNT…GWAA), 242 to 262 (PGGL…FNAF), 284 to 306 (ALNA…AYIS), 311 to 330 (GPWY…ARAW), and 345 to 365 (FFAS…CHMI).

It belongs to the UbiA prenyltransferase family.

It is found in the mitochondrion membrane. The enzyme catalyses heme b + (2E,6E)-farnesyl diphosphate + H2O = Fe(II)-heme o + diphosphate. Its function is as follows. Converts protoheme IX and farnesyl diphosphate to heme O. In Schizosaccharomyces pombe (strain 972 / ATCC 24843) (Fission yeast), this protein is Protoheme IX farnesyltransferase, mitochondrial (cox10).